The sequence spans 188 residues: MYERYAGLIFDMDGTILDTEPTHRKAWREVLGHYGLQYDIQAMIALNGSPTWRIAQAIIELNQADLDPHALAREKTEAVRSMLLDSVEPLPLVDVVKSWHGRRPMAVGTGSESAIAEALLAHLGLRHYFDAVVAADHVKHHKPAPDTFLLCAQRMGVQPTQCVVFEDADFGIQAARAAGMDAVDVRLL.

Catalysis depends on Asp-11, which acts as the Nucleophile. Residues Asp-11, Asp-13, and Asp-167 each coordinate Mg(2+). Position 11 to 13 (11 to 13) interacts with substrate; the sequence is DMD.

It belongs to the HAD-like hydrolase superfamily. CbbY/CbbZ/Gph/YieH family. Mg(2+) serves as cofactor. Mn(2+) is required as a cofactor. Requires Co(2+) as cofactor. The cofactor is Zn(2+).

Its function is as follows. Catalyzes strongly the dephosphorylation of fructose-1-phosphate (Fru1P) and slightly the dephosphorylation of 6-phosphogluconate (6P-Glu). It has low beta-phosphoglucomutase activity. The polypeptide is Fructose-1-phosphate phosphatase YqaB (yqaB) (Escherichia coli (strain K12)).